The chain runs to 230 residues: Mitochondrial fission factor homolog B (230 aa).

At 1–210 (MSGAAFPSPT…ENKERAKREM (210 aa)) the chain is on the cytoplasmic side. The tract at residues 117–153 (EQTSSVSHPSEEVRTQTKTRRERSVSENAGVHHNGPL) is disordered. Ser-142 is subject to Phosphoserine. A coiled-coil region spans residues 179 to 210 (VDATSLRRQIVKLNRRLQLLEEENKERAKREM). A helical; Anchor for type IV membrane protein membrane pass occupies residues 211–228 (VMYSITVAFWLVNSWVWF). The Extracellular portion of the chain corresponds to 229-230 (RR).

This sequence belongs to the Tango11 family.

The protein localises to the mitochondrion outer membrane. It is found in the peroxisome. In terms of biological role, plays a role in mitochondrial and peroxisomal fission. Promotes the recruitment and association of the fission mediator dynamin-related protein 1 (DNM1L) to the mitochondrial surface. The protein is Mitochondrial fission factor homolog B of Danio rerio (Zebrafish).